The sequence spans 431 residues: Tol-Pal system protein TolB (431 aa).

The signal sequence occupies residues 1–26; that stretch reads MSLMTKLGFRALVASCLIAAGGAANA. The tract at residues 411–431 is disordered; it reads PQILSVQGGSVREPSWGPFMQ.

Belongs to the TolB family. As to quaternary structure, the Tol-Pal system is composed of five core proteins: the inner membrane proteins TolA, TolQ and TolR, the periplasmic protein TolB and the outer membrane protein Pal. They form a network linking the inner and outer membranes and the peptidoglycan layer.

It is found in the periplasm. Functionally, part of the Tol-Pal system, which plays a role in outer membrane invagination during cell division and is important for maintaining outer membrane integrity. The chain is Tol-Pal system protein TolB from Burkholderia vietnamiensis (strain G4 / LMG 22486) (Burkholderia cepacia (strain R1808)).